The following is a 309-amino-acid chain: Tagatose-6-phosphate kinase (309 aa).

This sequence belongs to the carbohydrate kinase PfkB family. LacC subfamily.

It carries out the reaction D-tagatofuranose 6-phosphate + ATP = D-tagatofuranose 1,6-bisphosphate + ADP + H(+). Its pathway is carbohydrate metabolism; D-tagatose 6-phosphate degradation; D-glyceraldehyde 3-phosphate and glycerone phosphate from D-tagatose 6-phosphate: step 1/2. This Streptococcus pyogenes serotype M5 (strain Manfredo) protein is Tagatose-6-phosphate kinase.